Reading from the N-terminus, the 878-residue chain is Alanine--tRNA ligase (878 aa).

Zn(2+) contacts are provided by H566, H570, C668, and H672.

Belongs to the class-II aminoacyl-tRNA synthetase family. Zn(2+) serves as cofactor.

Its subcellular location is the cytoplasm. The enzyme catalyses tRNA(Ala) + L-alanine + ATP = L-alanyl-tRNA(Ala) + AMP + diphosphate. In terms of biological role, catalyzes the attachment of alanine to tRNA(Ala) in a two-step reaction: alanine is first activated by ATP to form Ala-AMP and then transferred to the acceptor end of tRNA(Ala). Also edits incorrectly charged Ser-tRNA(Ala) and Gly-tRNA(Ala) via its editing domain. This is Alanine--tRNA ligase from Bacillus subtilis (strain 168).